The primary structure comprises 484 residues: ATP-dependent RNA helicase DDX25 (484 aa).

The residue at position 49 (Thr-49) is a Phosphothreonine. The Nuclear export signal motif lies at 62-75 (LAANSLLNKLIRQS). The Q motif motif lies at 98-126 (KTFEELRLKEELLKGIYAMGFNRPSKIQE). The Nuclear localization signal signature appears at 101-115 (EELRLKEELLKGIYA). The Helicase ATP-binding domain occupies 131–301 (MMLAHPPQNL…ERIIPDPNVI (171 aa)). 144–151 (SQSGTGKT) lines the ATP pocket. Residues 248–251 (DEAD) carry the DEAD box motif. Positions 312–479 (NIRQYYVLCE…QLDPEDMDEI (168 aa)) constitute a Helicase C-terminal domain.

The protein belongs to the DEAD box helicase family. Post-translationally, phosphorylated on threonine residues. The phosphorylated form is found in the cytoplasm but not in the nucleus. Isoform 1 is expressed in germ cells. Isoform 2 is expressed in Leydig cells and in round spermatids of adult testis upon gonadotropin stimulation.

The protein resides in the cytoplasm. It localises to the nucleus. The enzyme catalyses ATP + H2O = ADP + phosphate + H(+). In terms of biological role, ATP-dependent RNA helicase. Required for mRNA export and translation regulation during spermatid development. This Mus musculus (Mouse) protein is ATP-dependent RNA helicase DDX25 (Ddx25).